The chain runs to 441 residues: Glutamyl-tRNA reductase (441 aa).

Substrate-binding positions include 49-52, Ser109, 114-116, and Gln120; these read TCNR and EGQ. Residue Cys50 is the Nucleophile of the active site. 198-203 contacts NADP(+); it reads GAGRMS.

Belongs to the glutamyl-tRNA reductase family. Homodimer.

The catalysed reaction is (S)-4-amino-5-oxopentanoate + tRNA(Glu) + NADP(+) = L-glutamyl-tRNA(Glu) + NADPH + H(+). It functions in the pathway porphyrin-containing compound metabolism; protoporphyrin-IX biosynthesis; 5-aminolevulinate from L-glutamyl-tRNA(Glu): step 1/2. Its pathway is porphyrin-containing compound metabolism; chlorophyll biosynthesis. Catalyzes the NADPH-dependent reduction of glutamyl-tRNA(Glu) to glutamate 1-semialdehyde (GSA). The sequence is that of Glutamyl-tRNA reductase from Prochlorococcus marinus (strain NATL1A).